A 63-amino-acid chain; its full sequence is Large ribosomal subunit protein uL29 (63 aa).

The protein belongs to the universal ribosomal protein uL29 family.

The chain is Large ribosomal subunit protein uL29 from Chromohalobacter salexigens (strain ATCC BAA-138 / DSM 3043 / CIP 106854 / NCIMB 13768 / 1H11).